The following is a 776-amino-acid chain: Protein translocase subunit SecA 2 (776 aa).

ATP is bound by residues glutamine 80, 98-102 (GEGKT), and aspartate 486.

This sequence belongs to the SecA family. Monomer and homodimer. Part of the essential Sec protein translocation apparatus which comprises SecA, SecYEG and auxiliary proteins SecDF. Other proteins may also be involved.

Its subcellular location is the cell membrane. The protein localises to the cytoplasm. The catalysed reaction is ATP + H2O + cellular proteinSide 1 = ADP + phosphate + cellular proteinSide 2.. Its function is as follows. Part of the Sec protein translocase complex. Interacts with the SecYEG preprotein conducting channel. Has a central role in coupling the hydrolysis of ATP to the transfer of proteins into and across the cell membrane, serving as an ATP-driven molecular motor driving the stepwise translocation of polypeptide chains across the membrane. This Listeria welshimeri serovar 6b (strain ATCC 35897 / DSM 20650 / CCUG 15529 / CIP 8149 / NCTC 11857 / SLCC 5334 / V8) protein is Protein translocase subunit SecA 2.